The chain runs to 596 residues: Chaperone protein DnaK (596 aa).

Thr-174 bears the Phosphothreonine; by autocatalysis mark. The tract at residues Ala-576 to Glu-596 is disordered.

The protein belongs to the heat shock protein 70 family.

In terms of biological role, acts as a chaperone. This is Chaperone protein DnaK from Mycoplasmopsis synoviae (strain 53) (Mycoplasma synoviae).